A 206-amino-acid chain; its full sequence is Protein DEHYDRATION-INDUCED 19 (206 aa).

Threonine 105 bears the Phosphothreonine mark. Serine 107 bears the Phosphoserine mark. Residues 142 to 167 (SSFISPTRSQSSPAPRQTKNVSEDKQ) form a disordered region. The segment covering 143–161 (SFISPTRSQSSPAPRQTKN) has biased composition (polar residues).

Belongs to the Di19 family. Interacts with ADO2/LKP2, CPK11 and CPK4. Weak interaction with CPK12 and no interactions with CPK1, CPK5 or CPK26. Phosphorylated within the NLS/NES region. In terms of tissue distribution, expressed in seedlings, roots, leaves, stems, flowers and siliques.

Its subcellular location is the nucleus. The sequence is that of Protein DEHYDRATION-INDUCED 19 (DI19-1) from Arabidopsis thaliana (Mouse-ear cress).